The chain runs to 380 residues: Cytochrome b (380 aa).

Helical transmembrane passes span 33-53 (FGSL…FLAM), 77-98 (WLIR…YLHI), 113-133 (WNIG…GYVL), and 178-198 (FFAF…LHLL). Residues His-83 and His-97 each coordinate heme b. 2 residues coordinate heme b: His-182 and His-196. His-201 provides a ligand contact to a ubiquinone. Helical transmembrane passes span 226–246 (YKDL…ALFT), 288–308 (LGGV…PILH), 320–340 (VTQF…WIGG), and 347–367 (YIII…LIMP).

This sequence belongs to the cytochrome b family. As to quaternary structure, the cytochrome bc1 complex contains 3 respiratory subunits (MT-CYB, CYC1 and UQCRFS1), 2 core proteins (UQCRC1 and UQCRC2) and probably 6 low-molecular weight proteins. The cofactor is heme b.

Its subcellular location is the mitochondrion inner membrane. Functionally, component of the ubiquinol-cytochrome c reductase complex (complex III or cytochrome b-c1 complex) that is part of the mitochondrial respiratory chain. The b-c1 complex mediates electron transfer from ubiquinol to cytochrome c. Contributes to the generation of a proton gradient across the mitochondrial membrane that is then used for ATP synthesis. The protein is Cytochrome b (mt-cyb) of Pagrus major (Red sea bream).